Consider the following 425-residue polypeptide: Serine--tRNA ligase 2 (425 aa).

Threonine 234–glutamate 236 serves as a coordination point for L-serine. Arginine 265–glutamate 267 provides a ligand contact to ATP. Glutamate 288 is a binding site for L-serine. Glutamate 352–serine 355 contacts ATP. L-serine is bound at residue serine 388.

Belongs to the class-II aminoacyl-tRNA synthetase family. Type-1 seryl-tRNA synthetase subfamily. In terms of assembly, homodimer. The tRNA molecule binds across the dimer.

It localises to the cytoplasm. The enzyme catalyses tRNA(Ser) + L-serine + ATP = L-seryl-tRNA(Ser) + AMP + diphosphate + H(+). It carries out the reaction tRNA(Sec) + L-serine + ATP = L-seryl-tRNA(Sec) + AMP + diphosphate + H(+). Its pathway is aminoacyl-tRNA biosynthesis; selenocysteinyl-tRNA(Sec) biosynthesis; L-seryl-tRNA(Sec) from L-serine and tRNA(Sec): step 1/1. Its function is as follows. Catalyzes the attachment of serine to tRNA(Ser). Is also able to aminoacylate tRNA(Sec) with serine, to form the misacylated tRNA L-seryl-tRNA(Sec), which will be further converted into selenocysteinyl-tRNA(Sec). This is Serine--tRNA ligase 2 from Clostridium acetobutylicum (strain ATCC 824 / DSM 792 / JCM 1419 / IAM 19013 / LMG 5710 / NBRC 13948 / NRRL B-527 / VKM B-1787 / 2291 / W).